The following is a 363-amino-acid chain: Putative transcriptional activator MSA2 (363 aa).

The disordered stretch occupies residues 1–20 (MVYTTPQQQQRFSSTPQSSH). S157 and S292 each carry phosphoserine.

In terms of assembly, interacts with transcription complexes SCB-binding factor (SBF) and MCB-binding factor (MBF). Interacts with SWI4.

The sequence is that of Putative transcriptional activator MSA2 (MSA2) from Saccharomyces cerevisiae (strain ATCC 204508 / S288c) (Baker's yeast).